The following is an 87-amino-acid chain: MNQEEKKKIIEQFRINEKDTGSAEVQVAILTARIRHLTEHLKAHPKDFHSRRGLMKMVGRRRKLLRYLRKSNPESYKSLIEKLNLRG.

The protein belongs to the universal ribosomal protein uS15 family. As to quaternary structure, part of the 30S ribosomal subunit. Forms a bridge to the 50S subunit in the 70S ribosome, contacting the 23S rRNA.

Functionally, one of the primary rRNA binding proteins, it binds directly to 16S rRNA where it helps nucleate assembly of the platform of the 30S subunit by binding and bridging several RNA helices of the 16S rRNA. In terms of biological role, forms an intersubunit bridge (bridge B4) with the 23S rRNA of the 50S subunit in the ribosome. This chain is Small ribosomal subunit protein uS15, found in Pseudothermotoga lettingae (strain ATCC BAA-301 / DSM 14385 / NBRC 107922 / TMO) (Thermotoga lettingae).